Reading from the N-terminus, the 807-residue chain is Glycerol-3-phosphate acyltransferase (807 aa).

The short motif at 308-313 (CHRSHM) is the HXXXXD motif element.

The protein belongs to the GPAT/DAPAT family.

The protein localises to the cell inner membrane. It carries out the reaction sn-glycerol 3-phosphate + an acyl-CoA = a 1-acyl-sn-glycero-3-phosphate + CoA. The protein operates within phospholipid metabolism; CDP-diacylglycerol biosynthesis; CDP-diacylglycerol from sn-glycerol 3-phosphate: step 1/3. This is Glycerol-3-phosphate acyltransferase from Shewanella denitrificans (strain OS217 / ATCC BAA-1090 / DSM 15013).